Here is a 431-residue protein sequence, read N- to C-terminus: uncharacterized protein (431 aa).

Disordered stretches follow at residues 17-66 (VDPE…GQQA) and 81-415 (GSVT…ALPR). The span at 91-106 (DKADREPAARPRDPRS) shows a compositional bias: basic and acidic residues. Residues 173 to 195 (TYRRRRPTAATPSRKKKARRGPK) show a composition bias toward basic residues. Over residues 235-244 (RTPGPVHSAA) the composition is skewed to low complexity. Residues 299 to 312 (RMGGSSGGRGGTPG) are compositionally biased toward gly residues. Positions 317–342 (RAAPGARPTAPDGAPGRWDGPADGPA) are enriched in low complexity. Over residues 343–360 (PGLGRGGWGVGREAGGSG) the composition is skewed to gly residues.

This is an uncharacterized protein from Homo sapiens (Human).